Consider the following 1322-residue polypeptide: Phosphoribosylformylglycinamidine synthase (1322 aa).

Residues 300–311 and Ala-702 contribute to the ATP site; that span reads GASTGAGGEIRD. Mg(2+) is bound by residues Asp-703, Glu-742, Asn-746, and Asp-915. Residue Ser-917 coordinates ATP. The region spanning 1073-1322 is the Glutamine amidotransferase type-1 domain; the sequence is VAILREQGIN…LFRNARAWVG (250 aa). Residue Cys-1166 is the Nucleophile of the active site. Active-site residues include His-1287 and Glu-1289.

It in the N-terminal section; belongs to the FGAMS family. In terms of assembly, monomer.

Its subcellular location is the cytoplasm. The catalysed reaction is N(2)-formyl-N(1)-(5-phospho-beta-D-ribosyl)glycinamide + L-glutamine + ATP + H2O = 2-formamido-N(1)-(5-O-phospho-beta-D-ribosyl)acetamidine + L-glutamate + ADP + phosphate + H(+). Its pathway is purine metabolism; IMP biosynthesis via de novo pathway; 5-amino-1-(5-phospho-D-ribosyl)imidazole from N(2)-formyl-N(1)-(5-phospho-D-ribosyl)glycinamide: step 1/2. In terms of biological role, phosphoribosylformylglycinamidine synthase involved in the purines biosynthetic pathway. Catalyzes the ATP-dependent conversion of formylglycinamide ribonucleotide (FGAR) and glutamine to yield formylglycinamidine ribonucleotide (FGAM) and glutamate. This Xylella fastidiosa (strain Temecula1 / ATCC 700964) protein is Phosphoribosylformylglycinamidine synthase.